A 159-amino-acid chain; its full sequence is Endoribonuclease YbeY (159 aa).

H125, H129, and H135 together coordinate Zn(2+).

It belongs to the endoribonuclease YbeY family. Requires Zn(2+) as cofactor.

The protein resides in the cytoplasm. Single strand-specific metallo-endoribonuclease involved in late-stage 70S ribosome quality control and in maturation of the 3' terminus of the 16S rRNA. The protein is Endoribonuclease YbeY of Thermoanaerobacter pseudethanolicus (strain ATCC 33223 / 39E) (Clostridium thermohydrosulfuricum).